The sequence spans 374 residues: Ribonuclease D (374 aa).

The region spanning 3-171 (YQLITTDDGL…MAIRLVEETT (169 aa)) is the 3'-5' exonuclease domain. In terms of domain architecture, HRDC spans 210–289 (KGRHLACLQK…AETQTMDAAE (80 aa)).

The protein belongs to the RNase D family. It depends on a divalent metal cation as a cofactor.

It localises to the cytoplasm. It carries out the reaction Exonucleolytic cleavage that removes extra residues from the 3'-terminus of tRNA to produce 5'-mononucleotides.. In terms of biological role, exonuclease involved in the 3' processing of various precursor tRNAs. Initiates hydrolysis at the 3'-terminus of an RNA molecule and releases 5'-mononucleotides. The sequence is that of Ribonuclease D from Musicola paradisiaca (strain Ech703) (Dickeya paradisiaca).